Consider the following 24-residue polypeptide: Brevinin-1Lb (24 aa).

A disulfide bridge links Cys-18 with Cys-24.

Expressed by the skin glands.

The protein resides in the secreted. Its function is as follows. Antibacterial activity against Gram-positive bacterium S.aureus and Gram-negative bacterium E.coli. The polypeptide is Brevinin-1Lb (Rana luteiventris (Columbia spotted frog)).